A 115-amino-acid chain; its full sequence is Somatostatin-1 (115 aa).

Residues 1–24 form the signal peptide; sequence MLSCRFQCALVLLSLAVVFSKVSA. Positions 25–88 are excised as a propeptide; it reads APSDLRLRQL…QDEVRLELDR (64 aa). The tract at residues 65–95 is disordered; the sequence is NDALDSSDLSRGADQDEVRLELDRSANSSPL. Positions 75–88 are enriched in basic and acidic residues; that stretch reads RGADQDEVRLELDR. Cys104 and Cys115 are disulfide-bonded.

This sequence belongs to the somatostatin family.

The protein resides in the secreted. In terms of biological role, somatostatin inhibits the release of somatotropin. This Protopterus annectens (African lungfish) protein is Somatostatin-1 (sst1).